The primary structure comprises 215 residues: Pyrrolidone-carboxylate peptidase (215 aa).

Catalysis depends on residues Glu80, Cys143, and His167.

This sequence belongs to the peptidase C15 family. As to quaternary structure, homotetramer.

The protein localises to the cytoplasm. The enzyme catalyses Release of an N-terminal pyroglutamyl group from a polypeptide, the second amino acid generally not being Pro.. Removes 5-oxoproline from various penultimate amino acid residues except L-proline. The sequence is that of Pyrrolidone-carboxylate peptidase from Bacillus cereus (strain ZK / E33L).